The primary structure comprises 315 residues: Phosphatidylglycerol--prolipoprotein diacylglyceryl transferase (315 aa).

The next 2 membrane-spanning stretches (helical) occupy residues 19–39 (FTIH…VWIL) and 93–113 (VWEG…VAFL). Arginine 141 serves as a coordination point for a 1,2-diacyl-sn-glycero-3-phospho-(1'-sn-glycerol). Transmembrane regions (helical) follow at residues 188–208 (LFHP…ALII) and 256–276 (VWTA…LYQY).

Belongs to the Lgt family.

The protein localises to the cell membrane. It catalyses the reaction L-cysteinyl-[prolipoprotein] + a 1,2-diacyl-sn-glycero-3-phospho-(1'-sn-glycerol) = an S-1,2-diacyl-sn-glyceryl-L-cysteinyl-[prolipoprotein] + sn-glycerol 1-phosphate + H(+). It participates in protein modification; lipoprotein biosynthesis (diacylglyceryl transfer). Catalyzes the transfer of the diacylglyceryl group from phosphatidylglycerol to the sulfhydryl group of the N-terminal cysteine of a prolipoprotein, the first step in the formation of mature lipoproteins. The sequence is that of Phosphatidylglycerol--prolipoprotein diacylglyceryl transferase from Bifidobacterium longum (strain DJO10A).